Here is an 837-residue protein sequence, read N- to C-terminus: Dapper homolog 2 (837 aa).

Positions 65-113 form a coiled coil; it reads ENVSKEELRLEATLSLLKQQLTRLRRQDVGLKTHLQQLDQQITELKLDV. 5 disordered regions span residues 189–265, 424–497, 512–564, 600–649, and 738–782; these read ADES…PKYQ, HGKH…DKSS, GSQR…KQSG, QQIP…HTQR, and EMSD…EDEG. 2 stretches are compositionally biased toward polar residues: residues 246 to 265 and 432 to 445; these read VKSS…PKYQ and LDLQ…NNTA. Composition is skewed to basic and acidic residues over residues 456-466, 486-496, and 548-560; these read ASEKRSGHFPK, EGSRASCHDKS, and LSRE…RTDL. Residues 741-759 are compositionally biased toward polar residues; the sequence is DYTTNRFGDSESSQGSQTA. Positions 768 to 782 are enriched in acidic residues; that stretch reads LDEEDLLEEEEEDEG. The PDZ-binding motif lies at 834 to 837; it reads MTLV.

This sequence belongs to the dapper family. Interacts with dvl2.

It localises to the cytoplasm. The protein resides in the late endosome. It is found in the nucleus. Its subcellular location is the cell membrane. Its function is as follows. Involved in regulation of intracellular signaling pathways during development. Specifically thought to play a role in canonical and/or non-canonical Wnt signaling pathways through interaction with DSH (Dishevelled) family proteins. Positive regulator of the Wnt signaling pathway which acts downstream of wnt1 indicative for non-canonical Wnt signaling. Also negatively regulates the Nodal signaling pathway, possibly by promoting the lysosomal degradation of Nodal receptors. Required for convergent extension movements in gastrulation. The chain is Dapper homolog 2 (dact2) from Danio rerio (Zebrafish).